A 231-amino-acid chain; its full sequence is Large ribosomal subunit protein uL1 (231 aa).

The protein belongs to the universal ribosomal protein uL1 family. In terms of assembly, part of the 50S ribosomal subunit.

In terms of biological role, binds directly to 23S rRNA. The L1 stalk is quite mobile in the ribosome, and is involved in E site tRNA release. Its function is as follows. Protein L1 is also a translational repressor protein, it controls the translation of the L11 operon by binding to its mRNA. This chain is Large ribosomal subunit protein uL1, found in Neisseria meningitidis serogroup A / serotype 4A (strain DSM 15465 / Z2491).